A 185-amino-acid chain; its full sequence is Ribosome-recycling factor (185 aa).

Belongs to the RRF family.

It localises to the cytoplasm. Responsible for the release of ribosomes from messenger RNA at the termination of protein biosynthesis. May increase the efficiency of translation by recycling ribosomes from one round of translation to another. In Listeria monocytogenes serotype 4a (strain HCC23), this protein is Ribosome-recycling factor.